Consider the following 122-residue polypeptide: Small ribosomal subunit protein uS13 (122 aa).

Residues 89 to 122 (GLRHRRGLPARGQRTKTNARTRKGPRRGVAGKRK) form a disordered region.

The protein belongs to the universal ribosomal protein uS13 family. As to quaternary structure, part of the 30S ribosomal subunit. Forms a loose heterodimer with protein S19. Forms two bridges to the 50S subunit in the 70S ribosome.

Functionally, located at the top of the head of the 30S subunit, it contacts several helices of the 16S rRNA. In the 70S ribosome it contacts the 23S rRNA (bridge B1a) and protein L5 of the 50S subunit (bridge B1b), connecting the 2 subunits; these bridges are implicated in subunit movement. Contacts the tRNAs in the A and P-sites. This Oleidesulfovibrio alaskensis (strain ATCC BAA-1058 / DSM 17464 / G20) (Desulfovibrio alaskensis) protein is Small ribosomal subunit protein uS13.